Here is a 504-residue protein sequence, read N- to C-terminus: Ribosomal protein uS12 methylthiotransferase RimO (504 aa).

Positions 21-131 (KRVGFISLGC…VMGHVRELLP (111 aa)) constitute an MTTase N-terminal domain. The [4Fe-4S] cluster site is built by Cys-30, Cys-66, Cys-95, Cys-186, Cys-190, and Cys-193. The 237-residue stretch at 172–408 (LTPRHYAYVK…MEVAQRISTE (237 aa)) folds into the Radical SAM core domain. One can recognise a TRAM domain in the interval 411–487 (SEKVGRVMDV…EYDLFGEVIE (77 aa)).

This sequence belongs to the methylthiotransferase family. RimO subfamily. [4Fe-4S] cluster serves as cofactor.

It localises to the cytoplasm. The catalysed reaction is L-aspartate(89)-[ribosomal protein uS12]-hydrogen + (sulfur carrier)-SH + AH2 + 2 S-adenosyl-L-methionine = 3-methylsulfanyl-L-aspartate(89)-[ribosomal protein uS12]-hydrogen + (sulfur carrier)-H + 5'-deoxyadenosine + L-methionine + A + S-adenosyl-L-homocysteine + 2 H(+). Its function is as follows. Catalyzes the methylthiolation of an aspartic acid residue of ribosomal protein uS12. This chain is Ribosomal protein uS12 methylthiotransferase RimO, found in Deinococcus radiodurans (strain ATCC 13939 / DSM 20539 / JCM 16871 / CCUG 27074 / LMG 4051 / NBRC 15346 / NCIMB 9279 / VKM B-1422 / R1).